The following is a 58-amino-acid chain: MTQVVLGENEGIDSALRRFKRQVSKAGILADVKYHRHFETPLERRKRKAVAARRKRRF.

It belongs to the bacterial ribosomal protein bS21 family.

In Trichormus variabilis (strain ATCC 29413 / PCC 7937) (Anabaena variabilis), this protein is Small ribosomal subunit protein bS21B.